The primary structure comprises 133 residues: uncharacterized protein (133 aa).

This is an uncharacterized protein from Saccharomyces cerevisiae (strain ATCC 204508 / S288c) (Baker's yeast).